A 237-amino-acid polypeptide reads, in one-letter code: Eukaryotic translation initiation factor 3 subunit K (237 aa).

One can recognise a PCI domain in the interval cysteine 44–aspartate 219.

It belongs to the eIF-3 subunit K family. Component of the eukaryotic translation initiation factor 3 (eIF-3) complex.

The protein localises to the cytoplasm. In terms of biological role, component of the eukaryotic translation initiation factor 3 (eIF-3) complex, which is involved in protein synthesis of a specialized repertoire of mRNAs and, together with other initiation factors, stimulates binding of mRNA and methionyl-tRNAi to the 40S ribosome. The eIF-3 complex specifically targets and initiates translation of a subset of mRNAs involved in cell proliferation. This is Eukaryotic translation initiation factor 3 subunit K from Neurospora crassa (strain ATCC 24698 / 74-OR23-1A / CBS 708.71 / DSM 1257 / FGSC 987).